Consider the following 80-residue polypeptide: Venom protein HGE029 (80 aa).

Residues 1–22 form the signal peptide; sequence MNAKAFLAIFMIALLITDRAEA.

Belongs to the non-disulfide-bridged peptide (NDBP) superfamily. Long chain multifunctional peptide (group 2) family. As to expression, expressed by the venom gland.

The protein resides in the secreted. The sequence is that of Venom protein HGE029 from Hoffmannihadrurus gertschi (Scorpion).